Here is a 390-residue protein sequence, read N- to C-terminus: L-rhamnonate dehydratase (390 aa).

2 residues coordinate substrate: H19 and R45. The Mg(2+) site is built by D211, E237, and E265. The active-site Proton acceptor is the H315. E335 contacts substrate.

This sequence belongs to the mandelate racemase/muconate lactonizing enzyme family. RhamD subfamily. It depends on Mg(2+) as a cofactor.

The catalysed reaction is L-rhamnonate = 2-dehydro-3-deoxy-L-rhamnonate + H2O. In terms of biological role, catalyzes the dehydration of L-rhamnonate to 2-keto-3-deoxy-L-rhamnonate (KDR). In Saccharopolyspora erythraea (strain ATCC 11635 / DSM 40517 / JCM 4748 / NBRC 13426 / NCIMB 8594 / NRRL 2338), this protein is L-rhamnonate dehydratase.